Reading from the N-terminus, the 368-residue chain is Large ribosomal subunit protein bL27m (368 aa).

The transit peptide at 1-20 (MFSGLHTSKYACQVVVQIRT) directs the protein to the mitochondrion. The tract at residues 23–44 (KRAAGSRTSMKDSAGRRLGPKK) is disordered. The span at 31–44 (SMKDSAGRRLGPKK) shows a compositional bias: basic and acidic residues.

Belongs to the bacterial ribosomal protein bL27 family.

Its subcellular location is the mitochondrion. Component of the large subunit of mitochondrial ribosome. In Candida glabrata (strain ATCC 2001 / BCRC 20586 / JCM 3761 / NBRC 0622 / NRRL Y-65 / CBS 138) (Yeast), this protein is Large ribosomal subunit protein bL27m (MRPL2).